We begin with the raw amino-acid sequence, 184 residues long: Peptide deformylase (184 aa).

2 residues coordinate Fe cation: Cys-111 and His-154. Residue Glu-155 is part of the active site. Fe cation is bound at residue His-158.

This sequence belongs to the polypeptide deformylase family. The cofactor is Fe(2+).

The catalysed reaction is N-terminal N-formyl-L-methionyl-[peptide] + H2O = N-terminal L-methionyl-[peptide] + formate. Its function is as follows. Removes the formyl group from the N-terminal Met of newly synthesized proteins. Requires at least a dipeptide for an efficient rate of reaction. N-terminal L-methionine is a prerequisite for activity but the enzyme has broad specificity at other positions. The sequence is that of Peptide deformylase from Lactobacillus gasseri (strain ATCC 33323 / DSM 20243 / BCRC 14619 / CIP 102991 / JCM 1131 / KCTC 3163 / NCIMB 11718 / NCTC 13722 / AM63).